A 296-amino-acid chain; its full sequence is Uricase (296 aa).

Residues Lys-14 and Thr-61 each act as charge relay system in the active site. 7 residues coordinate urate: Thr-61, Asp-62, Phe-163, Arg-180, Val-229, Gln-230, and Asn-256. Catalysis depends on His-258, which acts as the Charge relay system.

Belongs to the uricase family.

The protein resides in the peroxisome. It localises to the cytoplasm. Its subcellular location is the nucleus. It catalyses the reaction urate + O2 + H2O = 5-hydroxyisourate + H2O2. The protein operates within purine metabolism; urate degradation; (S)-allantoin from urate: step 1/3. In terms of biological role, catalyzes the oxidation of uric acid to 5-hydroxyisourate, which is further processed to form (S)-allantoin. The sequence is that of Uricase from Schizosaccharomyces pombe (strain 972 / ATCC 24843) (Fission yeast).